Here is a 291-residue protein sequence, read N- to C-terminus: Gamma-sarcoglycan (291 aa).

Residues 38 to 58 (LFVLLLLIVLLVNFALTIWIL) form a helical; Signal-anchor for type II membrane protein membrane-spanning segment. The Extracellular portion of the chain corresponds to 59 to 291 (RVMWFSPVGM…TCHEHSHLCL (233 aa)). N-linked (GlcNAc...) asparagine glycosylation occurs at Asn110. 2 disulfide bridges follow: Cys265-Cys290 and Cys267-Cys283.

The protein belongs to the sarcoglycan beta/delta/gamma/zeta family. Interacts with the syntrophin SNTA1. Cross-link to form 2 major subcomplexes: one consisting of SGCB, SGCD and SGCG and the other consisting of SGCB and SGCD. The association between SGCB and SGCG is particularly strong while SGCA is loosely associated with the other sarcoglycans. Interacts with FLNC. Disulfide bonds are present.

It localises to the cell membrane. The protein localises to the sarcolemma. It is found in the cytoplasm. The protein resides in the cytoskeleton. Component of the sarcoglycan complex, a subcomplex of the dystrophin-glycoprotein complex which forms a link between the F-actin cytoskeleton and the extracellular matrix. The polypeptide is Gamma-sarcoglycan (SGCG) (Bos taurus (Bovine)).